A 210-amino-acid chain; its full sequence is Mediator of RNA polymerase II transcription subunit 20 (210 aa).

It belongs to the Mediator complex subunit 20 family. In terms of assembly, component of the Mediator complex, which is composed of at least 21 subunits that form three structurally distinct submodules. The Mediator head module contains MED6, MED8, MED11, SRB4/MED17, SRB5/MED18, ROX3/MED19, SRB2/MED20 and SRB6/MED22, the middle module contains MED1, MED4, NUT1/MED5, MED7, CSE2/MED9, NUT2/MED10, SRB7/MED21 and SOH1/MED31, and the tail module contains MED2, PGD1/MED3, RGR1/MED14, GAL11/MED15 and SIN4/MED16. The head and the middle modules interact directly with RNA polymerase II, whereas the elongated tail module interacts with gene-specific regulatory proteins. MED1 interacts directly with MED4 and MED7. SRB2/MED20 interacts directly with SRB4/MED17 and SRB5/MED18.

It is found in the nucleus. Component of the Mediator complex, a coactivator involved in the regulated transcription of nearly all RNA polymerase II-dependent genes. Mediator functions as a bridge to convey information from gene-specific regulatory proteins to the basal RNA polymerase II transcription machinery. The Mediator complex, having a compact conformation in its free form, is recruited to promoters by direct interactions with regulatory proteins and serves for the assembly of a functional preinitiation complex with RNA polymerase II and the general transcription factors. The Mediator complex unfolds to an extended conformation and partially surrounds RNA polymerase II, specifically interacting with the unphosphorylated form of the C-terminal domain (CTD) of RNA polymerase II. The Mediator complex dissociates from the RNA polymerase II holoenzyme and stays at the promoter when transcriptional elongation begins. This is Mediator of RNA polymerase II transcription subunit 20 (SRB2) from Saccharomyces cerevisiae (strain ATCC 204508 / S288c) (Baker's yeast).